Consider the following 375-residue polypeptide: GDP-mannose-dependent alpha-mannosyltransferase (375 aa).

The protein belongs to the glycosyltransferase group 1 family. Glycosyltransferase 4 subfamily.

The protein operates within phospholipid metabolism; phosphatidylinositol metabolism. Catalyzes the addition of a mannose residue from GDP-D-mannose to GlcAGroAc2 to generate 1,2-di-O-C16/C18:1-(alpha-D-mannopyranosyl)-(1-4)-(alpha-D-glucopyranosyluronic acid)-(1-3)-glycerol(ManGlcAGroAc2). In Mycolicibacterium smegmatis (strain ATCC 700084 / mc(2)155) (Mycobacterium smegmatis), this protein is GDP-mannose-dependent alpha-mannosyltransferase (mgtA).